A 520-amino-acid polypeptide reads, in one-letter code: 2-isopropylmalate synthase (520 aa).

One can recognise a Pyruvate carboxyltransferase domain in the interval 12 to 274; the sequence is VLIFDTTLRD…TTGIDTTQIM (263 aa). 4 residues coordinate Mn(2+): D21, H209, H211, and N245. A regulatory domain region spans residues 398-520; that stretch reads RLLSLTVIAG…RLHAQHAAAE (123 aa).

It belongs to the alpha-IPM synthase/homocitrate synthase family. LeuA type 1 subfamily. As to quaternary structure, homodimer. Mn(2+) is required as a cofactor.

Its subcellular location is the cytoplasm. It catalyses the reaction 3-methyl-2-oxobutanoate + acetyl-CoA + H2O = (2S)-2-isopropylmalate + CoA + H(+). Its pathway is amino-acid biosynthesis; L-leucine biosynthesis; L-leucine from 3-methyl-2-oxobutanoate: step 1/4. Functionally, catalyzes the condensation of the acetyl group of acetyl-CoA with 3-methyl-2-oxobutanoate (2-ketoisovalerate) to form 3-carboxy-3-hydroxy-4-methylpentanoate (2-isopropylmalate). This is 2-isopropylmalate synthase from Methylobacterium nodulans (strain LMG 21967 / CNCM I-2342 / ORS 2060).